The chain runs to 141 residues: Hemoglobin subunit alpha (141 aa).

The Globin domain occupies 1 to 141; sequence VLSATDKANV…VATVLTSKYR (141 aa). Serine 3 is subject to Phosphoserine. An N6-succinyllysine mark is found at lysine 7 and lysine 11. Lysine 16 is modified (N6-acetyllysine; alternate). The residue at position 16 (lysine 16) is an N6-succinyllysine; alternate. Tyrosine 24 is modified (phosphotyrosine). Lysine 40 carries the post-translational modification N6-succinyllysine. Position 58 (histidine 58) interacts with O2. Histidine 87 contacts heme b. At serine 102 the chain carries Phosphoserine. Threonine 108 is modified (phosphothreonine). Serine 124 is subject to Phosphoserine. 2 positions are modified to phosphothreonine: threonine 134 and threonine 137. At serine 138 the chain carries Phosphoserine.

Belongs to the globin family. Heterotetramer of two alpha chains and two beta chains. As to expression, red blood cells.

Functionally, involved in oxygen transport from the lung to the various peripheral tissues. Hemopressin acts as an antagonist peptide of the cannabinoid receptor CNR1. Hemopressin-binding efficiently blocks cannabinoid receptor CNR1 and subsequent signaling. The sequence is that of Hemoglobin subunit alpha (HBA) from Erinaceus europaeus (Western European hedgehog).